The sequence spans 441 residues: Vacuolar cation/proton exchanger 5 (441 aa).

Residue Gly-2 is the site of N-myristoyl glycine attachment. The Cytoplasmic portion of the chain corresponds to 2-69 (GCCKVPALIQ…PNNSVLQSFK (68 aa)). S-palmitoyl cysteine attachment occurs at residues Cys-3 and Cys-4. A helical membrane pass occupies residues 70–90 (IVILSNKLNLLLPFGPLAILL). Residues 91–97 (HYLTDNK) are Extracellular-facing. Residues 98–118 (GWIFLLSLVGITPLAERLGYA) form a helical membrane-spanning segment. The Cytoplasmic portion of the chain corresponds to 119-129 (TEQLACYTGST). Residues 130–150 (VGGLLNATFGNVTELIISIFA) form a helical membrane-spanning segment. Positions 139-174 (GNVTELIISIFALKSGMIRVVQLTLLGSILSNMLLV) are cation selection. Residues 151–165 (LKSGMIRVVQLTLLG) lie on the Extracellular side of the membrane. A helical transmembrane segment spans residues 166-186 (SILSNMLLVLGCAFFCGGLVF). Residues 187–197 (SQKEQVFDKGN) are Cytoplasmic-facing. A helical membrane pass occupies residues 198 to 218 (AVVNSGLLLMAVMGLLFPAVL). Residues 219–231 (HYTHSEVHAGSSE) lie on the Extracellular side of the membrane. The helical transmembrane segment at 232–252 (LALSRFSSCIMLVAYAAYLFF) threads the bilayer. Over 253 to 286 (QLKSQPSSYTPLTEETNQNEETSDDDEDPEISKW) the chain is Cytoplasmic. A helical membrane pass occupies residues 287–307 (EAIIWLSILTAWVSLLSGYLV). The Extracellular segment spans residues 308-311 (DAIE). Residues 312-332 (GASVSWKIPISFISVILLPIV) form a helical membrane-spanning segment. Residues 333–354 (GNAAEHAGAIMFAMKDKLDLSL) are Cytoplasmic-facing. The cation selection stretch occupies residues 333–368 (GNAAEHAGAIMFAMKDKLDLSLGVAIGSSIQISMFA). The helical transmembrane segment at 355-375 (GVAIGSSIQISMFAVPFCVVI) threads the bilayer. Over 376–384 (GWMMGAQMD) the chain is Extracellular. Residues 385–405 (LNFQLFETATLFITVIVVAFF) form a helical membrane-spanning segment. Topologically, residues 406-412 (LQEGTSN) are cytoplasmic. A helical transmembrane segment spans residues 413-433 (YFKGLMLILCYLIVAASFFVH). The Extracellular portion of the chain corresponds to 434 to 441 (EDPHQDDI).

Belongs to the Ca(2+):cation antiporter (CaCA) (TC 2.A.19) family. Cation/proton exchanger (CAX) subfamily.

It is found in the vacuole membrane. In terms of biological role, vacuolar cation/proton exchanger (CAX). Translocates Ca(2+) and other metal ions into vacuoles using the proton gradient formed by H(+)-ATPase and H(+)-pyrophosphatase. This is Vacuolar cation/proton exchanger 5 (CAX5) from Arabidopsis thaliana (Mouse-ear cress).